A 58-amino-acid polypeptide reads, in one-letter code: UPF0391 membrane protein COXBURSA331_A2131 (58 aa).

The next 2 membrane-spanning stretches (helical) occupy residues 3 to 23 (FWVL…FTGI) and 30 to 50 (IAKI…IAML).

This sequence belongs to the UPF0391 family.

The protein localises to the cell membrane. This chain is UPF0391 membrane protein COXBURSA331_A2131, found in Coxiella burnetii (strain RSA 331 / Henzerling II).